The following is a 462-amino-acid chain: Argininosuccinate lyase (462 aa).

The protein belongs to the lyase 1 family. Argininosuccinate lyase subfamily.

The protein localises to the cytoplasm. It carries out the reaction 2-(N(omega)-L-arginino)succinate = fumarate + L-arginine. Its pathway is amino-acid biosynthesis; L-arginine biosynthesis; L-arginine from L-ornithine and carbamoyl phosphate: step 3/3. The polypeptide is Argininosuccinate lyase (Streptococcus agalactiae serotype III (strain NEM316)).